Reading from the N-terminus, the 349-residue chain is Lipoyl synthase (349 aa).

7 residues coordinate [4Fe-4S] cluster: cysteine 55, cysteine 60, cysteine 66, cysteine 81, cysteine 85, cysteine 88, and serine 292. The Radical SAM core domain occupies 67–281 (WEDREATFLI…SDAAYELGIK (215 aa)). The segment at 321–349 (LDSTTSQEASTLLERYGASEDTPVTASRR) is disordered.

The protein belongs to the radical SAM superfamily. Lipoyl synthase family. The cofactor is [4Fe-4S] cluster.

It is found in the cytoplasm. It catalyses the reaction [[Fe-S] cluster scaffold protein carrying a second [4Fe-4S](2+) cluster] + N(6)-octanoyl-L-lysyl-[protein] + 2 oxidized [2Fe-2S]-[ferredoxin] + 2 S-adenosyl-L-methionine + 4 H(+) = [[Fe-S] cluster scaffold protein] + N(6)-[(R)-dihydrolipoyl]-L-lysyl-[protein] + 4 Fe(3+) + 2 hydrogen sulfide + 2 5'-deoxyadenosine + 2 L-methionine + 2 reduced [2Fe-2S]-[ferredoxin]. It functions in the pathway protein modification; protein lipoylation via endogenous pathway; protein N(6)-(lipoyl)lysine from octanoyl-[acyl-carrier-protein]: step 2/2. Catalyzes the radical-mediated insertion of two sulfur atoms into the C-6 and C-8 positions of the octanoyl moiety bound to the lipoyl domains of lipoate-dependent enzymes, thereby converting the octanoylated domains into lipoylated derivatives. This chain is Lipoyl synthase, found in Corynebacterium jeikeium (strain K411).